We begin with the raw amino-acid sequence, 500 residues long: NF-kappa-B inhibitor cactus (500 aa).

Over residues 1 to 43 (MPSPTKAAEAATKATATSDCSCSAASVEQRAPSNAANPSSSLA) the composition is skewed to low complexity. 2 disordered regions span residues 1–148 (MPSP…MRLK) and 171–212 (LNNL…APPS). S45 bears the Phosphoserine; by PKC mark. Over residues 69-86 (NETSDSGFISGPQSSQIF) the composition is skewed to polar residues. Acidic residues predominate over residues 118–130 (IIDEEEDQEEQEK). The residue at position 144 (S144) is a Phosphoserine; by PKC. A compositionally biased stretch (polar residues) spans 171-189 (LNNLGQSSSTQITGRSKVQ). T183 is modified (phosphothreonine; by PKC). Residues 190–212 (SSTASTANANPSGSGATSSAPPS) are compositionally biased toward low complexity. ANK repeat units follow at residues 229 to 261 (DGDT…LLNI), 265 to 294 (VAQT…EPTV), 298 to 327 (HGNT…ATEI), 361 to 390 (DGER…DINA), and 395 to 424 (SGRT…KLNL). Phosphothreonine; by PKC occurs at positions 293 and 319. Position 395 is a phosphoserine; by PKC (S395).

Belongs to the NF-kappa-B inhibitor family. In terms of assembly, phosphorylated isoform A binds to dorsal (dl); inhibits dl translocation to the nucleus and therefore from binding to DNA. In vitro, interacts with IKKbeta. Interacts with cactin and kappa-B-Ras. Post-translationally, activated IKKbeta phosphorylates cact. Expressed in ovary (at protein level).

It localises to the cytoplasm. Functionally, involved in the formation of the dorsoventral pattern. It inhibits nuclear translocation of the dorsal morphogen in the dorsal region of the embryo. Acts as a negative regulator of the NF-kappa-B (rel) signaling pathway. Cact is degraded by IKKbeta, this is essential for NF-kappa-B (rel) activation. The sequence is that of NF-kappa-B inhibitor cactus (cact) from Drosophila melanogaster (Fruit fly).